The following is a 104-amino-acid chain: NADH-quinone oxidoreductase subunit K (104 aa).

Helical transmembrane passes span 4–24, 31–51, and 67–87; these read VPASAYLTLAIILFCIGLFGA, VIVLVCIELMLNAVNLNLVAF, and LFTMAVAAAEAAVGLAILIAL.

It belongs to the complex I subunit 4L family. As to quaternary structure, NDH-1 is composed of 14 different subunits. Subunits NuoA, H, J, K, L, M, N constitute the membrane sector of the complex.

The protein resides in the cell membrane. It carries out the reaction a quinone + NADH + 5 H(+)(in) = a quinol + NAD(+) + 4 H(+)(out). Functionally, NDH-1 shuttles electrons from NADH, via FMN and iron-sulfur (Fe-S) centers, to quinones in the respiratory chain. The immediate electron acceptor for the enzyme in this species is believed to be a menaquinone. Couples the redox reaction to proton translocation (for every two electrons transferred, four hydrogen ions are translocated across the cytoplasmic membrane), and thus conserves the redox energy in a proton gradient. The sequence is that of NADH-quinone oxidoreductase subunit K from Bacillus cereus (strain AH187).